The sequence spans 37 residues: Esculentin-2Rb (37 aa).

Cysteines 31 and 37 form a disulfide.

In terms of tissue distribution, expressed by the skin glands.

The protein localises to the secreted. In terms of biological role, antimicrobial peptide. This Pelophylax ridibundus (Marsh frog) protein is Esculentin-2Rb.